The chain runs to 151 residues: MHSLQAKILDPRLGTDFPLPQYATPGSAGLDLRAMLEEDTVLGPGQTLLIPTGLSIHIADPGLAALVLPRSGLGHKHGIVLGNLVGLIDSDYQGELMVSCWNRGESPFTIAVGERIAQLVLVPVVQAHFELVEQFDESQRGAGGFGHSGSH.

Residues 70–72 (RSG), Asn83, 87–89 (LID), and Met97 each bind substrate.

Belongs to the dUTPase family. Mg(2+) is required as a cofactor.

It carries out the reaction dUTP + H2O = dUMP + diphosphate + H(+). It functions in the pathway pyrimidine metabolism; dUMP biosynthesis; dUMP from dCTP (dUTP route): step 2/2. This enzyme is involved in nucleotide metabolism: it produces dUMP, the immediate precursor of thymidine nucleotides and it decreases the intracellular concentration of dUTP so that uracil cannot be incorporated into DNA. In Pseudomonas paraeruginosa (strain DSM 24068 / PA7) (Pseudomonas aeruginosa (strain PA7)), this protein is Deoxyuridine 5'-triphosphate nucleotidohydrolase.